The chain runs to 88 residues: Small ribosomal subunit protein uS15 (88 aa).

Belongs to the universal ribosomal protein uS15 family. As to quaternary structure, part of the 30S ribosomal subunit. Forms a bridge to the 50S subunit in the 70S ribosome, contacting the 23S rRNA.

Functionally, one of the primary rRNA binding proteins, it binds directly to 16S rRNA where it helps nucleate assembly of the platform of the 30S subunit by binding and bridging several RNA helices of the 16S rRNA. Its function is as follows. Forms an intersubunit bridge (bridge B4) with the 23S rRNA of the 50S subunit in the ribosome. This chain is Small ribosomal subunit protein uS15, found in Mesomycoplasma hyopneumoniae (strain 232) (Mycoplasma hyopneumoniae).